The following is a 334-amino-acid chain: MAAVVFIAFLYLGVASGVPVLDSSLDAEWQDWKIKYNKSYSLKEEKLKRVVWEEKLKMIKLHNRENSLGKNGFTMKMNEFGDQTDEEFRKMMIEISVWTHREGKSIMKREAGSILPKFVDWRKKGYVTPVRRQGDCDACWAFAVTGAIEAQAIWQTGKLTPLSVQNLVDCSKPQGNNGCLGGDTYNAFQYVLHNGGLESEATYPYEGKDGPCRYNPKNSKAEITGFVSLPQSEDILMAAVATIGPITAGIDASHESFKNYKGGIYHEPNCSSDTVTHGVLVVGYGFKGIETDGNHYWLIKNSWGKRWGIRGYMKLAKDKNNHCGIASYAHYPTI.

A signal peptide spans 1–17 (MAAVVFIAFLYLGVASG). The propeptide at 18 to 114 (VPVLDSSLDA…SIMKREAGSI (97 aa)) is activation peptide. 2 disulfide bridges follow: C136–C179 and C170–C212. C139 is an active-site residue. Residue N269 is glycosylated (N-linked (GlcNAc...) asparagine). C270 and C323 are disulfide-bonded. Active-site residues include H277 and N301.

Belongs to the peptidase C1 family. In terms of tissue distribution, placenta.

Its subcellular location is the lysosome. The sequence is that of Cathepsin R (Ctsr) from Mus musculus (Mouse).